Reading from the N-terminus, the 122-residue chain is Large ribosomal subunit protein uL14c (122 aa).

It belongs to the universal ribosomal protein uL14 family. As to quaternary structure, part of the 50S ribosomal subunit.

Its subcellular location is the plastid. It localises to the chloroplast. In terms of biological role, binds to 23S rRNA. The chain is Large ribosomal subunit protein uL14c from Lotus japonicus (Lotus corniculatus var. japonicus).